The sequence spans 604 residues: Phosphomethylpyrimidine synthase (604 aa).

Residues N218, M247, Y276, H312, S332 to G334, D373 to R376, and E412 each bind substrate. Zn(2+) is bound at residue H416. Residue Y439 participates in substrate binding. H480 is a binding site for Zn(2+). Positions 560, 563, and 568 each coordinate [4Fe-4S] cluster.

It belongs to the ThiC family. In terms of assembly, homodimer. [4Fe-4S] cluster is required as a cofactor.

The catalysed reaction is 5-amino-1-(5-phospho-beta-D-ribosyl)imidazole + S-adenosyl-L-methionine = 4-amino-2-methyl-5-(phosphooxymethyl)pyrimidine + CO + 5'-deoxyadenosine + formate + L-methionine + 3 H(+). The protein operates within cofactor biosynthesis; thiamine diphosphate biosynthesis. In terms of biological role, catalyzes the synthesis of the hydroxymethylpyrimidine phosphate (HMP-P) moiety of thiamine from aminoimidazole ribotide (AIR) in a radical S-adenosyl-L-methionine (SAM)-dependent reaction. This chain is Phosphomethylpyrimidine synthase, found in Zymomonas mobilis subsp. mobilis (strain ATCC 31821 / ZM4 / CP4).